The sequence spans 427 residues: Mannosylglucosylglycerate synthase (427 aa).

The protein belongs to the glycosyltransferase group 1 family. Requires Co(2+) as cofactor. Mg(2+) serves as cofactor. Mn(2+) is required as a cofactor. It depends on Ni(2+) as a cofactor.

The catalysed reaction is (2R)-2-O-(alpha-D-glucopyranosyl)-glycerate + GDP-alpha-D-mannose = (2R)-2-O-[alpha-D-mannopyranosyl-(1-&gt;2)-alpha-D-glucopyranosyl]-glycerate + GDP + H(+). Catalyzes the synthesis of mannosylglucosylglycerate (MGG) from glucosylglycerate (GG) and GDP-mannose. This chain is Mannosylglucosylglycerate synthase, found in Thermotoga maritima (strain ATCC 43589 / DSM 3109 / JCM 10099 / NBRC 100826 / MSB8).